A 243-amino-acid polypeptide reads, in one-letter code: Cytochrome c1, heme protein (243 aa).

Over 1-201 the chain is Mitochondrial intermembrane; that stretch reads GVDSHPPALP…CSNPWWDERK (201 aa). In terms of domain architecture, Cytochrome c spans 5–194; that stretch reads HPPALPWPHF…VTCFLEWCSN (190 aa). Residues C39, H40, and M159 each contribute to the heme site. The helical transmembrane segment at 202–221 threads the bilayer; it reads LLGYKTIATLAVIAVSSGYY. Residues 222-243 are Mitochondrial matrix-facing; that stretch reads NRFLSGLWRSRRLAFRPFNYSK.

The protein belongs to the cytochrome c family. In terms of assembly, component of the ubiquinol-cytochrome c oxidoreductase (cytochrome b-c1 complex, complex III, CIII), a multisubunit enzyme composed of 3 respiratory subunits cytochrome b, cytochrome c1 and Rieske protein, 2 core protein subunits, and additional low-molecular weight protein subunits. The complex exists as an obligatory dimer and forms supercomplexes (SCs) in the inner mitochondrial membrane with cytochrome c oxidase (complex IV, CIV). Heme is required as a cofactor.

It localises to the mitochondrion inner membrane. The enzyme catalyses a quinol + 2 Fe(III)-[cytochrome c](out) = a quinone + 2 Fe(II)-[cytochrome c](out) + 2 H(+)(out). Its function is as follows. Component of the ubiquinol-cytochrome c oxidoreductase, a multisubunit transmembrane complex that is part of the mitochondrial electron transport chain which drives oxidative phosphorylation. The respiratory chain contains 3 multisubunit complexes succinate dehydrogenase (complex II, CII), ubiquinol-cytochrome c oxidoreductase (cytochrome b-c1 complex, complex III, CIII) and cytochrome c oxidase (complex IV, CIV), that cooperate to transfer electrons derived from NADH and succinate to molecular oxygen, creating an electrochemical gradient over the inner membrane that drives transmembrane transport and the ATP synthase. The cytochrome b-c1 complex catalyzes electron transfer from ubiquinol to cytochrome c, linking this redox reaction to translocation of protons across the mitochondrial inner membrane, with protons being carried across the membrane as hydrogens on the quinol. In the process called Q cycle, 2 protons are consumed from the matrix, 4 protons are released into the intermembrane space and 2 electrons are passed to cytochrome c. Cytochrome c1 is a catalytic core subunit containing a c-type heme. It transfers electrons from the [2Fe-2S] iron-sulfur cluster of the Rieske protein to cytochrome c. The sequence is that of Cytochrome c1, heme protein from Euglena gracilis.